The sequence spans 899 residues: Protein translocase subunit SecA (899 aa).

ATP-binding positions include Q87, 105-109, and D512; that span reads GEGKT. The disordered stretch occupies residues 846 to 899; the sequence is MEEEQQQQAQKKIVFNLGEEPATAPQPARSKKSASRNDPCPCGSGKKYKKCCGK. Zn(2+) contacts are provided by C885, C887, C896, and C897.

The protein belongs to the SecA family. In terms of assembly, monomer and homodimer. Part of the essential Sec protein translocation apparatus which comprises SecA, SecYEG and auxiliary proteins SecDF-YajC and YidC. The cofactor is Zn(2+).

It localises to the cell inner membrane. Its subcellular location is the cytoplasm. It carries out the reaction ATP + H2O + cellular proteinSide 1 = ADP + phosphate + cellular proteinSide 2.. Functionally, part of the Sec protein translocase complex. Interacts with the SecYEG preprotein conducting channel. Has a central role in coupling the hydrolysis of ATP to the transfer of proteins into and across the cell membrane, serving as an ATP-driven molecular motor driving the stepwise translocation of polypeptide chains across the membrane. In Geobacter metallireducens (strain ATCC 53774 / DSM 7210 / GS-15), this protein is Protein translocase subunit SecA.